The primary structure comprises 603 residues: Outer envelope protein 64, mitochondrial (603 aa).

Serine 2 is modified (N-acetylserine). The helical transmembrane segment at 16–32 threads the bilayer; that stretch reads KVWVVIGVTVAGIVILA. TPR repeat units follow at residues 488–521, 523–555, and 556–589; these read SEVM…NGAN, TYYC…DKKN, and VKAY…EPQN.

As to expression, expressed in roots and flower buds. Detected in leaves.

It is found in the mitochondrion outer membrane. Functionally, chaperone receptor mediating Hsp90-dependent protein targeting to mitochondria. The polypeptide is Outer envelope protein 64, mitochondrial (OM64) (Arabidopsis thaliana (Mouse-ear cress)).